The following is a 139-amino-acid chain: Non-structural protein 1 (139 aa).

Residues 136-139 (DLNS) carry the DLNP; interaction with MAP1B motif.

The protein belongs to the pneumovirus non-structural protein 1 family. As to quaternary structure, monomer. Homomultimer. Heteromultimer with NS2. Interacts with the matrix protein M. Interacts with host ELOC and CUL2; this interaction allows NS1 to form an active E3 ligase with ELOC and CUL2. Interacts with host IRF3; this interaction leads to the disrupted association of IRF3 with CREBBP and thus reduced binding of IRF3 to the IFN-beta promoter. Interacts with host MAVS; this interaction prevents MAVS binding to RIGI and inhibits signaling pathway leading to interferon production. Interacts with host MAP1B/microtubule-associated protein 1B. Interacts with host TRIM25 (via SPRY domain); this interaction suppresses RIGI ubiquitination and results in decreased interaction between RIGI and MAVS.

Its subcellular location is the host cytoplasm. The protein localises to the host mitochondrion. It is found in the host nucleus. Functionally, plays a major role in antagonizing the type I IFN-mediated antiviral response by degrading or inhibiting multiple cellular factors required for either IFN induction or response pathways. Acts cooperatively with NS2 to repress activation and nuclear translocation of host IFN-regulatory factor IRF3. Also disrupts the association of IRF3 with CREBBP. Interacts with host mitochondrial-associated membrane (MAM) MAVS and prevents the interaction with RIGI. Interacts with TRIM25 to suppress TRIM25-mediated RIGI ubiquitination and thereby RIGI-MAVS interaction. Together with NS2, participates in the proteasomal degradation of host STAT2, IRF3, IRF7, TBK1 and RIGI through a NS-degradasome involving CUL2 and Elongin-C. The degradasome requires an intact mitochondrial MAVS. Decreases the levels of host TRAF3 and IKBKE/IKK-epsilon. As functions other than disruptions of the type I IFN-mediated antiviral signaling pathways, induces host SOCS1 and SOCS3 expression. Suppresses premature apoptosis by an NF-kappa-B-dependent, interferon-independent mechanism and thus facilitates virus growth. Additionally, NS1 may serve some inhibitory role in viral transcription and RNA replication. Suppresses proliferation and activation of host CD103+ CD8+ cytotoxic T-lymphocytes and Th17 helper T-lymphocytes. This Human respiratory syncytial virus B (strain 18537) protein is Non-structural protein 1 (1C).